Consider the following 1095-residue polypeptide: Voltage-gated inwardly rectifying potassium channel KCNH3 (1095 aa).

Residues 1 to 228 (MPAMRGLLAP…HCGALRATWD (228 aa)) lie on the Cytoplasmic side of the membrane. The 73-residue stretch at 18–90 (IATRFDGTHS…QQIRKALDEH (73 aa)) folds into the PAS domain. Residues 93–145 (FKAELILYRKSGLPFWCLLDVIPIKNEKGEVALFLVSHKDISETKNRGGPDNW) form the PAC domain. A compositionally biased stretch (basic and acidic residues) spans 137 to 150 (KNRGGPDNWKERGG). A disordered region spans residues 137–161 (KNRGGPDNWKERGGGRRRYGRAGSK). A helical membrane pass occupies residues 229–249 (GFILLATLYVAVTVPYSVCVS). The Extracellular segment spans residues 250–259 (TAREPSAARG). Residues 260-280 (PPSVCDLAVEVLFILDIVLNF) traverse the membrane as a helical segment. Over 281–302 (RTTFVSKSGQVVFAPKSICLHY) the chain is Cytoplasmic. The helical transmembrane segment at 303–323 (VTTWFLLDVIAALPFDLLHAF) threads the bilayer. The Extracellular segment spans residues 324-331 (KVNVYVGA). Residues 332-352 (HLLKTVRLLRLLRLLPRLDRY) traverse the membrane as a helical; Voltage-sensor segment. The Cytoplasmic segment spans residues 353 to 361 (SQYSAVVLT). Residues 362 to 382 (LLMAVFALLAHWVACVWFYIG) traverse the membrane as a helical segment. The Extracellular portion of the chain corresponds to 383 to 464 (QQEIESSESE…GGPSLRSAYI (82 aa)). The segment at 417 to 447 (PDGGNSSGQSENCSSSSSSSGSGGGRGSEAN) is disordered. Low complexity predominate over residues 419–436 (GGNSSGQSENCSSSSSSS). 3 N-linked (GlcNAc...) asparagine glycosylation sites follow: Asn421, Asn428, and Asn447. An intramembrane region (pore-forming) is located at residues 465–485 (TSLYFALSSLTSVGFGNVSAN). The Selectivity filter motif lies at 476-481 (SVGFGN). Residues 486-490 (TDTEK) lie on the Extracellular side of the membrane. The chain crosses the membrane as a helical span at residues 491–511 (IFSICTMLIGALMHAVVFGNV). Topologically, residues 512-1095 (TAIIQRMYAR…QWTQEEGTGV (584 aa)) are cytoplasmic. 593–708 (LFEAASRGCL…FAPRFSRGLR (116 aa)) lines the a nucleoside 3',5'-cyclic phosphate pocket. 3 disordered regions span residues 740 to 823 (EEKE…LPPM), 854 to 883 (VGQS…PSEA), and 965 to 1069 (GSVL…PWDP). A compositionally biased stretch (basic residues) spans 784 to 796 (TAPRPRLGGRGRP). Residues 857–872 (SGPECSSSPSPGTESG) show a composition bias toward low complexity. Positions 974–991 (HPRPGQPPPLMAPWPWGP) are enriched in pro residues.

Belongs to the potassium channel family. H (Eag) (TC 1.A.1.20) subfamily. Kv12.2/KCNH3 sub-subfamily. The potassium channel is probably composed of a homo- or heterotetrameric complex of pore-forming alpha subunits that can associate with modulating beta subunits. Interacts with KCNE1 and KCNE3; these interactions regulate KCNH3 trafficking to the plasma membrane and its subsequent voltage-gated potassium channel activity. Post-translationally, N-glycosylated. N-glycosylation mediates traffick to the cell membrane but is not necessary for voltage-gated potassium channel activity. In terms of tissue distribution, detected in brain, but not in other tissues.

The protein localises to the cell membrane. It catalyses the reaction K(+)(in) = K(+)(out). In terms of biological role, pore-forming (alpha) subunit of a voltage-gated inwardly rectifying potassium channel. Charactherized by a fast rate of activation during depolarization followed by a rapid inactivation at much more depolarized value causing inward rectification due to a C-type inactivation mechanism. Exhibits a rapid recovery from inactivation. In Mus musculus (Mouse), this protein is Voltage-gated inwardly rectifying potassium channel KCNH3.